Consider the following 86-residue polypeptide: UPF0335 protein BruAb1_1737 (86 aa).

This sequence belongs to the UPF0335 family.

The polypeptide is UPF0335 protein BruAb1_1737 (Brucella abortus biovar 1 (strain 9-941)).